The primary structure comprises 283 residues: Phosphatidylserine decarboxylase proenzyme (283 aa).

Residues D88, H145, and S248 each act as charge relay system; for autoendoproteolytic cleavage activity in the active site. S248 serves as the catalytic Schiff-base intermediate with substrate; via pyruvic acid; for decarboxylase activity. S248 bears the Pyruvic acid (Ser); by autocatalysis mark.

This sequence belongs to the phosphatidylserine decarboxylase family. PSD-B subfamily. Prokaryotic type I sub-subfamily. Heterodimer of a large membrane-associated beta subunit and a small pyruvoyl-containing alpha subunit. Pyruvate serves as cofactor. Post-translationally, is synthesized initially as an inactive proenzyme. Formation of the active enzyme involves a self-maturation process in which the active site pyruvoyl group is generated from an internal serine residue via an autocatalytic post-translational modification. Two non-identical subunits are generated from the proenzyme in this reaction, and the pyruvate is formed at the N-terminus of the alpha chain, which is derived from the carboxyl end of the proenzyme. The autoendoproteolytic cleavage occurs by a canonical serine protease mechanism, in which the side chain hydroxyl group of the serine supplies its oxygen atom to form the C-terminus of the beta chain, while the remainder of the serine residue undergoes an oxidative deamination to produce ammonia and the pyruvoyl prosthetic group on the alpha chain. During this reaction, the Ser that is part of the protease active site of the proenzyme becomes the pyruvoyl prosthetic group, which constitutes an essential element of the active site of the mature decarboxylase.

The protein resides in the cell membrane. The enzyme catalyses a 1,2-diacyl-sn-glycero-3-phospho-L-serine + H(+) = a 1,2-diacyl-sn-glycero-3-phosphoethanolamine + CO2. Its pathway is phospholipid metabolism; phosphatidylethanolamine biosynthesis; phosphatidylethanolamine from CDP-diacylglycerol: step 2/2. In terms of biological role, catalyzes the formation of phosphatidylethanolamine (PtdEtn) from phosphatidylserine (PtdSer). The chain is Phosphatidylserine decarboxylase proenzyme from Variovorax paradoxus (strain S110).